The primary structure comprises 264 residues: Thymidylate synthase (264 aa).

Arg21 is a binding site for dUMP. A (6R)-5,10-methylene-5,6,7,8-tetrahydrofolate-binding site is contributed by His51. Residue 126–127 (RR) participates in dUMP binding. Catalysis depends on Cys146, which acts as the Nucleophile. DUMP is bound by residues 166-169 (RSCD), Asn177, and 207-209 (HLY). (6R)-5,10-methylene-5,6,7,8-tetrahydrofolate is bound at residue Asp169. A (6R)-5,10-methylene-5,6,7,8-tetrahydrofolate-binding site is contributed by Ala263.

The protein belongs to the thymidylate synthase family. Bacterial-type ThyA subfamily. In terms of assembly, homodimer.

It localises to the cytoplasm. It carries out the reaction dUMP + (6R)-5,10-methylene-5,6,7,8-tetrahydrofolate = 7,8-dihydrofolate + dTMP. The protein operates within pyrimidine metabolism; dTTP biosynthesis. Catalyzes the reductive methylation of 2'-deoxyuridine-5'-monophosphate (dUMP) to 2'-deoxythymidine-5'-monophosphate (dTMP) while utilizing 5,10-methylenetetrahydrofolate (mTHF) as the methyl donor and reductant in the reaction, yielding dihydrofolate (DHF) as a by-product. This enzymatic reaction provides an intracellular de novo source of dTMP, an essential precursor for DNA biosynthesis. This is Thymidylate synthase from Yersinia pestis bv. Antiqua (strain Antiqua).